Reading from the N-terminus, the 353-residue chain is MDLYRLARPLLFRADPEDAHRRALGALAWAAEQLWAGWLDSVFGYPDPRLEVKLWGLSFANPLGLAAGFDKNAEAVGAWEHLGFGFAEVGTVTRHAQPGNPRPRLFRLPADQAAINRMGFNNDGADALALRLAGRRWGIPIGINLGKSKVTPLEQASDDYLYSFERLYHLGDYFVVNVSSPNTPGLRELQQADRLGEILARLQCANRESKPLLVKIAPDLGWDAVDAVVDLCGEHRLAGVIATNTTIARSGLRSDLQETGGLSGAPLRNRSTEVIGHIWGRTRGQLPIVGVGGIFSGEDAWEKIAHGASLLQVYTGWIYEGPWMVRRILASLATRLERSGFEHLQQATGCAFS.

FMN is bound by residues 67 to 71 and T91; that span reads AGFDK. K71 is a substrate binding site. 116–120 serves as a coordination point for substrate; that stretch reads NRMGF. The FMN site is built by N144 and N177. N177 serves as a coordination point for substrate. The active-site Nucleophile is S180. A substrate-binding site is contributed by N182. Positions 215 and 243 each coordinate FMN. 244 to 245 lines the substrate pocket; the sequence is NT. FMN-binding positions include G264, G293, and 314–315; that span reads YT.

Belongs to the dihydroorotate dehydrogenase family. Type 2 subfamily. Monomer. Requires FMN as cofactor.

It is found in the cell membrane. The enzyme catalyses (S)-dihydroorotate + a quinone = orotate + a quinol. It functions in the pathway pyrimidine metabolism; UMP biosynthesis via de novo pathway; orotate from (S)-dihydroorotate (quinone route): step 1/1. In terms of biological role, catalyzes the conversion of dihydroorotate to orotate with quinone as electron acceptor. The protein is Dihydroorotate dehydrogenase (quinone) of Gloeobacter violaceus (strain ATCC 29082 / PCC 7421).